We begin with the raw amino-acid sequence, 816 residues long: Transcription factor qa-1f (816 aa).

The zn(2)-C6 fungal-type DNA-binding region spans C76 to C103. Residues S184 to I202 show a composition bias toward polar residues. Residues S184 to L235 form a disordered region.

It is found in the nucleus. Functionally, transcription activator; part of the qa gene cluster that mediates the catabolism of quinic acid (QA) and as such, allows the use of QA as a sole carbon source. Activates the expression of qa cluster genes by binding to a 16 base-pair consensus sequence 5'-GGRTAARYRYTTAYCC-3' present in the promoters of the target genes. Regulates its own expression. May regulate the expression of many other genes inclusing genes with products in 8 mutually connected metabolic pathways: (1) starch and sucrose metabolism; (2) glycolysis/glucanogenesis; (3) TCA Cycle; (4) butanoate metabolism; (5) pyruvate metabolism; (6) aromatic amino acid and QA metabolism; (7) valine, leucine, and isoleucine degradation; and (8) transport of sugars and amino acids. The protein is Transcription factor qa-1f of Neurospora crassa (strain ATCC 24698 / 74-OR23-1A / CBS 708.71 / DSM 1257 / FGSC 987).